We begin with the raw amino-acid sequence, 620 residues long: Glutathione-regulated potassium-efflux system protein KefC (620 aa).

Transmembrane regions (helical) follow at residues 4 to 24, 26 to 46, 54 to 74, 90 to 110, 114 to 134, 149 to 169, 178 to 198, 218 to 238, 270 to 290, 294 to 314, 327 to 347, and 359 to 379; these read HTLI…PIAV, LGLG…PWGL, SILH…GLEL, GALQ…LLGL, VAEL…MQAM, FAVL…IPLL, MGAF…VVLL, VFSA…EEVG, GLLL…GTLI, LRIV…LWLI, WFAV…GAAQ, and SLTL…VILN. Residues 399-518 enclose the RCK N-terminal domain; that stretch reads QPRVIIAGFG…AGVEKPERET (120 aa). A disordered region spans residues 597–620; the sequence is GWQGTEEGKHTGNMADEPETKPSS.

The protein belongs to the monovalent cation:proton antiporter 2 (CPA2) transporter (TC 2.A.37) family. KefC subfamily. As to quaternary structure, homodimer. Interacts with the regulatory subunit KefF.

The protein resides in the cell inner membrane. Functionally, pore-forming subunit of a potassium efflux system that confers protection against electrophiles. Catalyzes K(+)/H(+) antiport. The polypeptide is Glutathione-regulated potassium-efflux system protein KefC (Escherichia coli O17:K52:H18 (strain UMN026 / ExPEC)).